The primary structure comprises 272 residues: DNA repair protein RecO (272 aa).

This sequence belongs to the RecO family.

Its function is as follows. Involved in DNA repair and RecF pathway recombination. The chain is DNA repair protein RecO from Latilactobacillus sakei subsp. sakei (strain 23K) (Lactobacillus sakei subsp. sakei).